A 339-amino-acid chain; its full sequence is MAPVLQSSQPWVEKYRPKQVKDVAHQEEVVRVLTNTLQTADCPHMLFYGPPGTGKTTTALAIAHQLFGPELYKSRVLELNASDDRGINVVRTKIKDFAAVAVGSNHRQSGYPCPSFKIIILDEADSMTEDAQNALRRTMETYSKVTRFFFICNYISRIIEPLASRCAKFRFKPLSEEVMSNRILHICNEEGLSLDGEALSTLSSISQGDLRRAITYLQSATRLFGSTITSTDLLNVSGVVPLEVVNKLFTACKSGDFDIANKEVDNIVAEGYPASQIINQLFDIVAEADSDITDMQKAKICKCLAETDKRLVDGADEYLQLLDVASSTICALSEMAQDF.

49-56 (GPPGTGKT) is an ATP binding site.

It belongs to the activator 1 small subunits family. Heterotetramer of subunits RFC2, RFC3, RFC4 and RFC5 that can form a complex with RFC1.

The protein resides in the nucleus. Its function is as follows. May be involved in DNA replication and thus regulate cell proliferation. This chain is Replication factor C subunit 4 (RFC4), found in Arabidopsis thaliana (Mouse-ear cress).